The primary structure comprises 599 residues: Aspartate--tRNA ligase (599 aa).

Residue E180 coordinates L-aspartate. Residues 204–207 (QIFK) are aspartate. R226 serves as a coordination point for L-aspartate. Residues 226-228 (RDE) and Q235 each bind ATP. Residue H454 coordinates L-aspartate. Residue E488 participates in ATP binding. R495 lines the L-aspartate pocket. Residue 540-543 (GLDR) coordinates ATP.

Belongs to the class-II aminoacyl-tRNA synthetase family. Type 1 subfamily. Homodimer.

It is found in the cytoplasm. It catalyses the reaction tRNA(Asp) + L-aspartate + ATP = L-aspartyl-tRNA(Asp) + AMP + diphosphate. Catalyzes the attachment of L-aspartate to tRNA(Asp) in a two-step reaction: L-aspartate is first activated by ATP to form Asp-AMP and then transferred to the acceptor end of tRNA(Asp). This chain is Aspartate--tRNA ligase, found in Clostridium beijerinckii (strain ATCC 51743 / NCIMB 8052) (Clostridium acetobutylicum).